A 424-amino-acid polypeptide reads, in one-letter code: Histidine--tRNA ligase (424 aa).

This sequence belongs to the class-II aminoacyl-tRNA synthetase family. As to quaternary structure, homodimer.

It localises to the cytoplasm. It carries out the reaction tRNA(His) + L-histidine + ATP = L-histidyl-tRNA(His) + AMP + diphosphate + H(+). The polypeptide is Histidine--tRNA ligase (Salmonella paratyphi A (strain ATCC 9150 / SARB42)).